A 661-amino-acid chain; its full sequence is ATP-dependent RNA helicase vasa (661 aa).

Residues 1–10 (MSDDWDDEPI) are compositionally biased toward acidic residues. Positions 1–186 (MSDDWDDEPI…RRRRNEDDIN (186 aa)) are disordered. Serine 22 carries the post-translational modification Phosphoserine. Position 27 is a phosphothreonine (threonine 27). 2 stretches are compositionally biased toward gly residues: residues 38-52 (DGVG…GYQG) and 60-83 (RIGG…GGFH). Basic and acidic residues predominate over residues 85 to 95 (GRREGERDFRG). A run of 5 repeats spans residues 93-99 (FRGGEGG), 100-106 (FRGGQGG), 107-113 (SRGGQGG), 114-120 (SRGGQGG), and 121-127 (FRGGEGG). Residues 93 to 127 (FRGGEGGFRGGQGGSRGGQGGSRGGQGGFRGGEGG) are 5 X 7 AA tandem repeats of [FS]-R-G-G-[EQ]-G-G. A compositionally biased stretch (gly residues) spans 96 to 129 (GEGGFRGGQGGSRGGQGGSRGGQGGFRGGEGGFR). The segment covering 131–172 (RLYENEDGDERRGRLDREERGGERRGRLDREERGGERGERGD) has biased composition (basic and acidic residues). Positions 184-188 (DINNN) match the B30.2/SPRY domain-binding motif motif. Residues 184 to 203 (DINNNNNIVEDVERKREFYI) are required for posterior localization in oocyte. A Q motif motif is present at residues 245 to 273 (QHFTSADLRDIIIDNVNKSGYKIPTPIQK). The 178-residue stretch at 276-453 (IPVISSGRDL…GEFLKNYVFV (178 aa)) folds into the Helicase ATP-binding domain. 289–296 (AQTGSGKT) is a binding site for ATP. The short motif at 399 to 402 (DEAD) is the DEAD box element. Residues 477–624 (KRSKLIEILS…TVPDFLRTCG (148 aa)) enclose the Helicase C-terminal domain.

The protein belongs to the DEAD box helicase family. DDX4/VASA subfamily. In terms of assembly, interacts with eIF5B and faf. Interacts with gus (via B30.2/SPRY domain) and Fsn (via B30.2/SPRY domain). Interacts with aub, me31B, eIF-4a and TER94. Interacts with piwi; this interaction is RNA independent. Interacts with Dcr-1 and Fmr1; these interactions occur in the polar granules. It depends on Mg(2+) as a cofactor. In terms of processing, ubiquitinated during oogenesis. Deubiquitinated by faf, which protects this protein from proteasome-mediated degradation. In terms of tissue distribution, abundantly expressed in the female germline. Gus and faf are required for vas expression in the posterior pole of the oocyte.

It localises to the cytoplasm. The protein localises to the perinuclear region. Its subcellular location is the cytoplasmic ribonucleoprotein granule. The enzyme catalyses ATP + H2O = ADP + phosphate + H(+). Functionally, involved in translational control mechanisms operating in early stages of oogenesis. Required maternally in many stages of oogenesis, including cystocyte differentiation, oocyte differentiation, and specification of anterior-posterior polarity in the developing cysts. Essential for the formation and/or structural integrity of perinuclear nuage particles during germ cell formation. Required for gus, Fsn and aub accumulation at the posterior pole of the embryo. Required for the localization of vas to the perinuclear region of nurse cells. May have a role in production of piwi-interacting RNA (piRNA). The polypeptide is ATP-dependent RNA helicase vasa (Drosophila melanogaster (Fruit fly)).